The following is a 641-amino-acid chain: 1-deoxy-D-xylulose-5-phosphate synthase (641 aa).

Thiamine diphosphate contacts are provided by residues H78 and 119–121 (AHS). Residue D150 participates in Mg(2+) binding. Thiamine diphosphate is bound by residues 151 to 152 (GA), N179, Y288, and E370. A Mg(2+)-binding site is contributed by N179.

Belongs to the transketolase family. DXPS subfamily. Homodimer. Requires Mg(2+) as cofactor. Thiamine diphosphate is required as a cofactor.

It catalyses the reaction D-glyceraldehyde 3-phosphate + pyruvate + H(+) = 1-deoxy-D-xylulose 5-phosphate + CO2. Its pathway is metabolic intermediate biosynthesis; 1-deoxy-D-xylulose 5-phosphate biosynthesis; 1-deoxy-D-xylulose 5-phosphate from D-glyceraldehyde 3-phosphate and pyruvate: step 1/1. Functionally, catalyzes the acyloin condensation reaction between C atoms 2 and 3 of pyruvate and glyceraldehyde 3-phosphate to yield 1-deoxy-D-xylulose-5-phosphate (DXP). In Azorhizobium caulinodans (strain ATCC 43989 / DSM 5975 / JCM 20966 / LMG 6465 / NBRC 14845 / NCIMB 13405 / ORS 571), this protein is 1-deoxy-D-xylulose-5-phosphate synthase.